A 478-amino-acid chain; its full sequence is Ankyrin repeat and BTB/POZ domain-containing protein 1 (478 aa).

2 ANK repeats span residues 1 to 31 (MDTS…EVNV) and 35 to 64 (WDST…RCEA). 2 consecutive BTB domains span residues 115-182 (SDVV…DIGV) and 272-346 (PDIC…ELPP). A coiled-coil region spans residues 450-478 (TVQTYSAIEEAQQQLRALENLLVSIGLDC).

It localises to the cytoplasm. Its function is as follows. May act as a mediator of the PTEN growth-suppressive signaling pathway. May play a role in developmental processes. This is Ankyrin repeat and BTB/POZ domain-containing protein 1 from Rattus norvegicus (Rat).